We begin with the raw amino-acid sequence, 750 residues long: Photosystem I P700 chlorophyll a apoprotein A1 (750 aa).

8 helical membrane-spanning segments follow: residues 70-93 (VFSA…FHGA), 156-179 (LYST…FHYH), 195-219 (LNHH…HVSL), 291-309 (TAHH…GHMY), 346-369 (WHAQ…HHMY), 385-411 (LSLF…IFMV), 433-455 (AIIS…LYIH), and 531-549 (FLVH…LILL). [4Fe-4S] cluster-binding residues include C573 and C582. 2 helical membrane passes run 589-610 (HVFL…HFSW) and 664-686 (LSAY…MFLF). Residue H675 coordinates chlorophyll a'. Positions 683 and 691 each coordinate chlorophyll a. W692 provides a ligand contact to phylloquinone. A helical membrane pass occupies residues 724–744 (AVGVAHYLLGGIATTWAFFLA).

Belongs to the PsaA/PsaB family. As to quaternary structure, the PsaA/B heterodimer binds the P700 chlorophyll special pair and subsequent electron acceptors. PSI consists of a core antenna complex that captures photons, and an electron transfer chain that converts photonic excitation into a charge separation. The eukaryotic PSI reaction center is composed of at least 11 subunits. P700 is a chlorophyll a/chlorophyll a' dimer, A0 is one or more chlorophyll a, A1 is one or both phylloquinones and FX is a shared 4Fe-4S iron-sulfur center. serves as cofactor.

The protein localises to the plastid. It localises to the chloroplast thylakoid membrane. It catalyses the reaction reduced [plastocyanin] + hnu + oxidized [2Fe-2S]-[ferredoxin] = oxidized [plastocyanin] + reduced [2Fe-2S]-[ferredoxin]. Functionally, psaA and PsaB bind P700, the primary electron donor of photosystem I (PSI), as well as the electron acceptors A0, A1 and FX. PSI is a plastocyanin-ferredoxin oxidoreductase, converting photonic excitation into a charge separation, which transfers an electron from the donor P700 chlorophyll pair to the spectroscopically characterized acceptors A0, A1, FX, FA and FB in turn. Oxidized P700 is reduced on the lumenal side of the thylakoid membrane by plastocyanin. In Marchantia polymorpha (Common liverwort), this protein is Photosystem I P700 chlorophyll a apoprotein A1.